A 613-amino-acid chain; its full sequence is pH-response transcription factor pacC/RIM101 (613 aa).

The segment at 1–61 is disordered; sequence MSPSAPEQKP…SSTAPSTSSD (61 aa). Residues 11–60 are compositionally biased toward low complexity; the sequence is QLQQQQQQQQQGSSSGDSSSGSVNDSKSVTPAPSATSSTSQSSTAPSTSS. C2H2-type zinc fingers lie at residues 64–89, 100–124, and 130–152; these read LICR…CERH, LTCQ…IRVH, and HKCE…VKTH. Residues 146 to 157 show a composition bias toward basic and acidic residues; that stretch reads KKHVKTHADDSV. Disordered regions lie at residues 146–186, 371–391, 406–535, and 565–613; these read KKHV…YDHT, NTPS…GADG, AISS…ATRE, and EFVE…MPGA. A compositionally biased stretch (low complexity) spans 417-441; that stretch reads PPSSSMSYTSGHSPSPSSSAMSPQS. Composition is skewed to polar residues over residues 442–460 and 506–517; these read RHGS…SLPA and SGASTPKASESA. Positions 451-454 match the YPX[LI] motif 1 motif; sequence YPTL. The short motif at 605 to 608 is the YPX[LI] motif 2 element; that stretch reads YPIL.

It belongs to the pacC/RIM101 family. In terms of assembly, binds to DNA. In terms of processing, activated by C-terminal proteolytic cleavage by signaling protease (probably palB/RIM13) at neutral to alkaline ambient pH.

Its subcellular location is the cytoplasm. It localises to the nucleus. In terms of biological role, transcription factor that mediates regulation of both acid- and alkaline-expressed genes in response to ambient pH. At alkaline ambient pH, activates transcription of alkaline-expressed genes (including PAC1 itself) and represses transcription of acid-expressed genes. This chain is pH-response transcription factor pacC/RIM101 (PAC1), found in Gibberella moniliformis (Maize ear and stalk rot fungus).